The sequence spans 59 residues: Large ribosomal subunit protein uL30 (59 aa).

This sequence belongs to the universal ribosomal protein uL30 family. In terms of assembly, part of the 50S ribosomal subunit.

The protein is Large ribosomal subunit protein uL30 of Listeria welshimeri serovar 6b (strain ATCC 35897 / DSM 20650 / CCUG 15529 / CIP 8149 / NCTC 11857 / SLCC 5334 / V8).